A 132-amino-acid polypeptide reads, in one-letter code: MFAVIKTGGRQYRVVPDDVLEIGKIAGDVGTIIQLGEVLMLGGDTPVLGLPTVAGATVAAEVLQHKRGPKVISFKKRRRKNSKRKRGYRDEITVLRITEILADGKAPSIGPRPPREKKPVVETSAEADDAAA.

The segment at 104–132 is disordered; that stretch reads GKAPSIGPRPPREKKPVVETSAEADDAAA.

The protein belongs to the bacterial ribosomal protein bL21 family. Part of the 50S ribosomal subunit. Contacts protein L20.

Its function is as follows. This protein binds to 23S rRNA in the presence of protein L20. This Rhodopseudomonas palustris (strain BisB18) protein is Large ribosomal subunit protein bL21.